The following is a 413-amino-acid chain: Adenylosuccinate synthetase (413 aa).

GTP-binding positions include G11–K17 and G39–T41. The active-site Proton acceptor is D12. Mg(2+)-binding residues include D12 and G39. Residues D12–K15, N37–H40, T125, R139, Q217, T232, and R296 contribute to the IMP site. H40 acts as the Proton donor in catalysis. T292 to R298 provides a ligand contact to substrate. GTP-binding positions include R298, K324 to D326, and S402 to G404.

Belongs to the adenylosuccinate synthetase family. Homodimer. Mg(2+) is required as a cofactor.

The protein localises to the cytoplasm. The enzyme catalyses IMP + L-aspartate + GTP = N(6)-(1,2-dicarboxyethyl)-AMP + GDP + phosphate + 2 H(+). The protein operates within purine metabolism; AMP biosynthesis via de novo pathway; AMP from IMP: step 1/2. In terms of biological role, plays an important role in the de novo pathway of purine nucleotide biosynthesis. Catalyzes the first committed step in the biosynthesis of AMP from IMP. This Nautilia profundicola (strain ATCC BAA-1463 / DSM 18972 / AmH) protein is Adenylosuccinate synthetase.